Reading from the N-terminus, the 447-residue chain is NADH-quinone oxidoreductase subunit N (447 aa).

Transmembrane regions (helical) follow at residues 4-24 (FAAL…MLAA), 27-47 (LPGL…VALA), 68-88 (LTGL…RPDG), 92-112 (EGPA…GAVH), 113-133 (AASL…LFVL), 146-166 (FLIL…LGHA), 181-201 (ALLT…LALV), 215-235 (PGAA…TALV), 245-265 (VWAL…NLAA), 280-300 (VGHA…APAA), 302-322 (LFYI…AALI), 342-362 (GAAM…AGFF), and 376-395 (AWAL…YYYL).

The protein belongs to the complex I subunit 2 family. As to quaternary structure, NDH-1 is composed of 14 different subunits. Subunits NuoA, H, J, K, L, M, N constitute the membrane sector of the complex.

The protein resides in the cell inner membrane. The catalysed reaction is a quinone + NADH + 5 H(+)(in) = a quinol + NAD(+) + 4 H(+)(out). NDH-1 shuttles electrons from NADH, via FMN and iron-sulfur (Fe-S) centers, to quinones in the respiratory chain. The immediate electron acceptor for the enzyme in this species is believed to be ubiquinone. Couples the redox reaction to proton translocation (for every two electrons transferred, four hydrogen ions are translocated across the cytoplasmic membrane), and thus conserves the redox energy in a proton gradient. The chain is NADH-quinone oxidoreductase subunit N from Cereibacter sphaeroides (strain ATCC 17025 / ATH 2.4.3) (Rhodobacter sphaeroides).